The primary structure comprises 93 residues: Auxin-induced protein 10A5 (93 aa).

Belongs to the ARG7 family.

The protein is Auxin-induced protein 10A5 of Glycine max (Soybean).